We begin with the raw amino-acid sequence, 906 residues long: Protein translocase subunit SecA (906 aa).

ATP-binding positions include Q86, 104–108 (GEGKT), and D499. A disordered region spans residues 862–887 (KPVVSRIDPKDRNPDDPTSWGRVSRN). Zn(2+) is bound by residues C890, C892, C901, and H902.

Belongs to the SecA family. As to quaternary structure, monomer and homodimer. Part of the essential Sec protein translocation apparatus which comprises SecA, SecYEG and auxiliary proteins SecDF-YajC and YidC. Zn(2+) serves as cofactor.

Its subcellular location is the cell inner membrane. It is found in the cytoplasm. It catalyses the reaction ATP + H2O + cellular proteinSide 1 = ADP + phosphate + cellular proteinSide 2.. Part of the Sec protein translocase complex. Interacts with the SecYEG preprotein conducting channel. Has a central role in coupling the hydrolysis of ATP to the transfer of proteins into and across the cell membrane, serving both as a receptor for the preprotein-SecB complex and as an ATP-driven molecular motor driving the stepwise translocation of polypeptide chains across the membrane. The chain is Protein translocase subunit SecA from Rickettsia peacockii (strain Rustic).